Reading from the N-terminus, the 190-residue chain is Proline-rich protein 3 (190 aa).

Disordered regions lie at residues 1 to 94 (MPKR…GLGP), 110 to 130 (PPFP…KEAR), and 142 to 161 (KNTY…SDRP). Residues 37 to 48 (MGPPSLLGPPPM) are compositionally biased toward pro residues. The C3H1-type zinc finger occupies 157–185 (KSDRPVCRHFSKKGHCRYEDHCAFYHPGV).

The sequence is that of Proline-rich protein 3 (Prr3) from Mus musculus (Mouse).